The primary structure comprises 275 residues: Large ribosomal subunit protein uL2 (275 aa).

Disordered stretches follow at residues 36–55 (KQSK…RHQG) and 223–275 (VAMN…RHKR). Positions 39 to 48 (KNAGRNNSGR) are enriched in polar residues. The segment covering 229–239 (DHPHGGGEGRT) has biased composition (basic and acidic residues).

The protein belongs to the universal ribosomal protein uL2 family. As to quaternary structure, part of the 50S ribosomal subunit. Forms a bridge to the 30S subunit in the 70S ribosome.

One of the primary rRNA binding proteins. Required for association of the 30S and 50S subunits to form the 70S ribosome, for tRNA binding and peptide bond formation. It has been suggested to have peptidyltransferase activity; this is somewhat controversial. Makes several contacts with the 16S rRNA in the 70S ribosome. In Aromatoleum aromaticum (strain DSM 19018 / LMG 30748 / EbN1) (Azoarcus sp. (strain EbN1)), this protein is Large ribosomal subunit protein uL2.